The primary structure comprises 135 residues: Auxin-responsive protein SAUR66 (135 aa).

It belongs to the ARG7 family.

The protein localises to the cell membrane. Its function is as follows. May promote auxin-stimulated organ elongation, such as hypocotyls, stamen filaments and petals. This is Auxin-responsive protein SAUR66 from Arabidopsis thaliana (Mouse-ear cress).